The following is a 942-amino-acid chain: PH and SEC7 domain-containing protein C11E3.11c (942 aa).

Residues 1–18 (MSRNASNAYLKNGNSTPS) show a composition bias toward polar residues. Disordered regions lie at residues 1–128 (MSRN…TRLN) and 259–308 (SRNL…ETTR). The span at 24–40 (PSSLSQRSKTSTRSSKP) shows a compositional bias: low complexity. Polar residues-rich tracts occupy residues 50 to 60 (WFKNESSSRHP), 90 to 125 (ASMSTNDLPSHPRSQSVMGFSSSTSQLTGTSNSSRT), 271 to 284 (YGNSRTPLRDSSNY), and 292 to 305 (NRQSSLSIPKSTSE). Residues 295 to 497 (SSLSIPKSTS…LSSYKSFASN (203 aa)) form the SEC7 domain. The PH domain occupies 681 to 804 (PYIKQGILKF…WIDALNYWAA (124 aa)).

In Schizosaccharomyces pombe (strain 972 / ATCC 24843) (Fission yeast), this protein is PH and SEC7 domain-containing protein C11E3.11c.